The chain runs to 299 residues: Pyridoxal 5'-phosphate synthase subunit PdxS (299 aa).

Aspartate 29 contacts D-ribose 5-phosphate. Residue lysine 86 is the Schiff-base intermediate with D-ribose 5-phosphate of the active site. D-ribose 5-phosphate is bound at residue glycine 158. Arginine 170 provides a ligand contact to D-glyceraldehyde 3-phosphate. D-ribose 5-phosphate contacts are provided by residues glycine 219 and 240 to 241; that span reads GS.

It belongs to the PdxS/SNZ family. In terms of assembly, in the presence of PdxT, forms a dodecamer of heterodimers.

It carries out the reaction aldehydo-D-ribose 5-phosphate + D-glyceraldehyde 3-phosphate + L-glutamine = pyridoxal 5'-phosphate + L-glutamate + phosphate + 3 H2O + H(+). The protein operates within cofactor biosynthesis; pyridoxal 5'-phosphate biosynthesis. Its function is as follows. Catalyzes the formation of pyridoxal 5'-phosphate from ribose 5-phosphate (RBP), glyceraldehyde 3-phosphate (G3P) and ammonia. The ammonia is provided by the PdxT subunit. Can also use ribulose 5-phosphate and dihydroxyacetone phosphate as substrates, resulting from enzyme-catalyzed isomerization of RBP and G3P, respectively. This Mycobacterium bovis (strain ATCC BAA-935 / AF2122/97) protein is Pyridoxal 5'-phosphate synthase subunit PdxS.